We begin with the raw amino-acid sequence, 1011 residues long: Liprin-beta-1 (1011 aa).

Ser37 carries the post-translational modification Phosphoserine. Thr39 is modified (phosphothreonine). Ser40 carries the phosphoserine modification. Residues 156–405 are a coiled coil; it reads QQELLSRTSL…VPEEFHTTIL (250 aa). Position 322 is an N6-acetyllysine (Lys322). Disordered regions lie at residues 420–439 and 463–634; these read ETSE…EEND and KSSS…RDLG. Phosphoserine is present on residues Ser434 and Ser466. Positions 470–492 are enriched in basic and acidic residues; sequence LKKETSDGEKETIQKTSEDRAPA. Residue Lys471 forms a Glycyl lysine isopeptide (Lys-Gly) (interchain with G-Cter in SUMO2) linkage. Ser523 and Ser540 each carry phosphoserine. Residues 546–556 show a composition bias toward basic and acidic residues; the sequence is ETEKETAEHLD. Position 579 is a phosphoserine (Ser579). Over residues 584–598 the composition is skewed to basic residues; the sequence is KKSRGIMKLFGKLRR. Phosphoserine occurs at positions 601 and 636. 2 SAM domains span residues 647-711 and 719-782; these read WTKE…LGSE and LDFN…LRIN. Ser794 bears the Phosphoserine mark. Residues 804–876 form the SAM 3 domain; it reads VQKWTNHRVM…ATHFNLLIGA (73 aa). Residues Ser999, Ser1001, and Ser1003 each carry the phosphoserine modification. Phosphothreonine is present on Thr1005.

Belongs to the liprin family. Liprin-beta subfamily. In terms of assembly, forms homodimers and heterodimers. Interacts with S100A4 in a Ca(2+)-dependent mode. Part of a cortical microtubule stabilization complex (CMSC) composed of KANK1, PPFIA1, PPFIBP1, ERC1/ELKS, PHLDB2/LL5beta, CLASPs, KIF21A and possibly additional interactors; within CMSCs KANK1 and PHLDB2/LL5beta seem to be the core components for recruiting microtubule-binding proteins KIF21A and CLASPs, whereas PPFIA1, PPFIBP1 and ERC1/ELKS serve as scaffolds for protein clustering. Interacts with KANK1 (via CC1 domain, residues 244-339). In terms of tissue distribution, widely expressed. Absent in liver.

Its subcellular location is the cytoplasm. The protein localises to the cell cortex. Its function is as follows. May regulate the disassembly of focal adhesions. Did not bind receptor-like tyrosine phosphatases type 2A. The chain is Liprin-beta-1 (PPFIBP1) from Homo sapiens (Human).